A 160-amino-acid polypeptide reads, in one-letter code: Cytochrome b6-f complex subunit 4 (160 aa).

3 helical membrane passes run Ile36–Ile56, Leu95–Glu115, and Pro127–Ala147.

It belongs to the cytochrome b family. PetD subfamily. The 4 large subunits of the cytochrome b6-f complex are cytochrome b6, subunit IV (17 kDa polypeptide, petD), cytochrome f and the Rieske protein, while the 4 small subunits are petG, petL, petM and petN. The complex functions as a dimer.

Its subcellular location is the plastid. The protein resides in the chloroplast thylakoid membrane. Its function is as follows. Component of the cytochrome b6-f complex, which mediates electron transfer between photosystem II (PSII) and photosystem I (PSI), cyclic electron flow around PSI, and state transitions. The chain is Cytochrome b6-f complex subunit 4 from Gracilaria tenuistipitata var. liui (Red alga).